Here is a 335-residue protein sequence, read N- to C-terminus: DNA-directed RNA polymerase subunit alpha (335 aa).

Residues 1-233 (MVREKITVST…DLFIPFLHME (233 aa)) form an alpha N-terminal domain (alpha-NTD) region. The segment at 265 to 335 (KEIALKSIFI…KQLVIFLPKK (71 aa)) is alpha C-terminal domain (alpha-CTD).

Belongs to the RNA polymerase alpha chain family. In terms of assembly, in plastids the minimal PEP RNA polymerase catalytic core is composed of four subunits: alpha, beta, beta', and beta''. When a (nuclear-encoded) sigma factor is associated with the core the holoenzyme is formed, which can initiate transcription.

It localises to the plastid. The protein localises to the chloroplast. It catalyses the reaction RNA(n) + a ribonucleoside 5'-triphosphate = RNA(n+1) + diphosphate. DNA-dependent RNA polymerase catalyzes the transcription of DNA into RNA using the four ribonucleoside triphosphates as substrates. The chain is DNA-directed RNA polymerase subunit alpha from Coffea arabica (Arabian coffee).